We begin with the raw amino-acid sequence, 75 residues long: Protein SlyX homolog (75 aa).

The protein belongs to the SlyX family.

The sequence is that of Protein SlyX homolog from Vibrio vulnificus (strain CMCP6).